We begin with the raw amino-acid sequence, 502 residues long: Maturase K (502 aa).

The protein belongs to the intron maturase 2 family. MatK subfamily.

Its subcellular location is the plastid. The protein resides in the chloroplast. Functionally, usually encoded in the trnK tRNA gene intron. Probably assists in splicing its own and other chloroplast group II introns. The polypeptide is Maturase K (Fremontodendron californicum (California flannelbush)).